Here is a 555-residue protein sequence, read N- to C-terminus: MADGCGTGKEPPYPGAAAALRRWEQLRRRAAAPWARGLLAVAAGLGLFYAALRVPLRLRDGLAAVTVFLSTLTPKFYFALTVTSSFISGLIFVFEWWHFRKYGTSFIEQVSVSHLRPLIGGVENSPPAPAAFSAGENEANRQNMPECKMWRNPLNLFRGAEYSRYMWVTGKEPLTYYDMNLSAQDHQNFFTCDTDALRPSDTVMQKAWRERNPQARIKAAYQALELNNDCATAYVLLAEEEATTIVDAERYFKQALKAGEMIYRKSQNCHSQSPQHEAQLRRDTNVLVYVKRRLAMCARKLGRIRESVKMMRDLMKEFPLLSMLNIHENLLEALLELQAYADVQAVLAKYDDISLPKSAAICYTAALLKARAVSERFSPETAFKRGLSTAEINAVEAIHRAVEFNPHVPKYLLEMKSLVLPPEHILKRGDSEAVAYAFFHLQHWKRIEGALHLLHCTWEGTFRMIPYPLEKGHLFYPYPSCTETADRELLPTFHEVSVYPQKELPFFIHFTAGLCSFSAMLALLTHQFPELMVVFAKAVLRVLWPVSAPSVLASG.

Helical transmembrane passes span 32 to 52 (APWARGLLAVAAGLGLFYAAL), 76 to 96 (FYFALTVTSSFISGLIFVFEW), 504 to 524 (LPFFIHFTAGLCSFSAMLALL), and 531 to 551 (LMVVFAKAVLRVLWPVSAPSV).

This sequence belongs to the ST7 family.

The protein localises to the membrane. The protein is Suppressor of tumorigenicity 7 protein-like (ST7L) of Gallus gallus (Chicken).